Reading from the N-terminus, the 207-residue chain is Imidazole glycerol phosphate synthase subunit HisH (207 aa).

The Glutamine amidotransferase type-1 domain occupies 1–207 (MIAIVDYNMG…ENFTKYRNLK (207 aa)). The active-site Nucleophile is Cys79. Residues His185 and Glu187 contribute to the active site.

Heterodimer of HisH and HisF.

The protein localises to the cytoplasm. The catalysed reaction is 5-[(5-phospho-1-deoxy-D-ribulos-1-ylimino)methylamino]-1-(5-phospho-beta-D-ribosyl)imidazole-4-carboxamide + L-glutamine = D-erythro-1-(imidazol-4-yl)glycerol 3-phosphate + 5-amino-1-(5-phospho-beta-D-ribosyl)imidazole-4-carboxamide + L-glutamate + H(+). It carries out the reaction L-glutamine + H2O = L-glutamate + NH4(+). Its pathway is amino-acid biosynthesis; L-histidine biosynthesis; L-histidine from 5-phospho-alpha-D-ribose 1-diphosphate: step 5/9. Its function is as follows. IGPS catalyzes the conversion of PRFAR and glutamine to IGP, AICAR and glutamate. The HisH subunit catalyzes the hydrolysis of glutamine to glutamate and ammonia as part of the synthesis of IGP and AICAR. The resulting ammonia molecule is channeled to the active site of HisF. The polypeptide is Imidazole glycerol phosphate synthase subunit HisH (Sulfurimonas denitrificans (strain ATCC 33889 / DSM 1251) (Thiomicrospira denitrificans (strain ATCC 33889 / DSM 1251))).